The primary structure comprises 131 residues: MRHRKSGRQLNRNSSHRQAMFRNMASSLVRHEVIKTTVAKAKELRRVVEPLITLAKSDSVANRRLAFARTRDAEVVGKLFNELGPRYQERPGGYTRILKCGLRTGDKAPMAYIELVGRPEAAEAVEADDAE.

It belongs to the bacterial ribosomal protein bL17 family. Part of the 50S ribosomal subunit. Contacts protein L32.

The sequence is that of Large ribosomal subunit protein bL17 from Shewanella violacea (strain JCM 10179 / CIP 106290 / LMG 19151 / DSS12).